The primary structure comprises 1475 residues: Mediator of RNA polymerase II transcription subunit 1 (1475 aa).

Residues 1–10 (MSGSNAKSSG) show a composition bias toward polar residues. Disordered regions lie at residues 1 to 26 (MSGS…KNKQ), 616 to 644 (ETDP…KTSD), 709 to 992 (GVTA…VASG), 1135 to 1166 (QPQP…AGAS), 1184 to 1245 (NKTG…SKKA), 1263 to 1354 (KANS…RFDH), and 1387 to 1475 (PKLS…LAGE). Composition is skewed to low complexity over residues 621–641 (SGSS…GSAK), 711–729 (TASS…ITGK), and 738–782 (KSTA…SGSS). A phosphoserine mark is found at S830, S834, S854, and S858. Polar residues-rich tracts occupy residues 860–874 (VYSS…NSPK) and 888–897 (GKPSMSTLKS). Over residues 919 to 934 (TSSGPSASSGSSGATG) the composition is skewed to low complexity. The span at 944–953 (APPPPPPIPP) shows a compositional bias: pro residues. Low complexity-rich tracts occupy residues 954–966 (LASS…SSQS), 973–989 (SSAS…TAGV), 1143–1159 (TSSC…SAGS), 1185–1225 (KTGS…TGST), and 1265–1276 (NSSGNLSSKLSG). Positions 1286–1296 (TKSNSTNSFQE) are enriched in polar residues. 2 stretches are compositionally biased toward low complexity: residues 1334–1346 (SGSV…GSMS) and 1399–1409 (TSGRSTPSGSS). Composition is skewed to polar residues over residues 1415–1430 (GTSS…STGL) and 1442–1458 (SQSG…TAGT).

Belongs to the Mediator complex subunit 1 family. As to quaternary structure, component of the Mediator complex.

It localises to the nucleus. Component of the Mediator complex, a coactivator involved in the regulated transcription of nearly all RNA polymerase II-dependent genes. Mediator functions as a bridge to convey information from gene-specific regulatory proteins to the basal RNA polymerase II transcription machinery. Mediator is recruited to promoters by direct interactions with regulatory proteins and serves as a scaffold for the assembly of a functional preinitiation complex with RNA polymerase II and the general transcription factors. Required for activated transcription of the MtnA, MtnB and MtnD genes. This chain is Mediator of RNA polymerase II transcription subunit 1 (MED1), found in Drosophila melanogaster (Fruit fly).